The chain runs to 31 residues: Cytochrome b6-f complex subunit 6 (31 aa).

The helical transmembrane segment at 4–24 (ITSYFGFLLAALTITSALFIG) threads the bilayer.

The protein belongs to the PetL family. As to quaternary structure, the 4 large subunits of the cytochrome b6-f complex are cytochrome b6, subunit IV (17 kDa polypeptide, PetD), cytochrome f and the Rieske protein, while the 4 small subunits are PetG, PetL, PetM and PetN. The complex functions as a dimer.

It is found in the plastid. It localises to the chloroplast thylakoid membrane. Its function is as follows. Component of the cytochrome b6-f complex, which mediates electron transfer between photosystem II (PSII) and photosystem I (PSI), cyclic electron flow around PSI, and state transitions. PetL is important for photoautotrophic growth as well as for electron transfer efficiency and stability of the cytochrome b6-f complex. This Coffea arabica (Arabian coffee) protein is Cytochrome b6-f complex subunit 6.